Consider the following 978-residue polypeptide: Mast/stem cell growth factor receptor Kit (978 aa).

Residues 1 to 25 (MRGARGAWDFLFVLLLLLLVQTGSS) form the signal peptide. The Extracellular portion of the chain corresponds to 26 to 525 (QPSVSPGELS…QIHAHTLFTP (500 aa)). Ig-like C2-type domains lie at 27-112 (PSVS…VFVR), 121-205 (DLPL…LKVR), 212-309 (PVVS…LEVV), 318-411 (PMMN…VNVN), and 414-508 (PEIL…FNFA). An intrachain disulfide couples Cys58 to Cys97. N-linked (GlcNAc...) asparagine glycosylation is found at Asn94, Asn130, and Asn145. Intrachain disulfides connect Cys136–Cys186, Cys151–Cys183, and Cys233–Cys291. Asn284, Asn294, Asn301, Asn321, Asn353, Asn368, Asn401, Asn464, and Asn487 each carry an N-linked (GlcNAc...) asparagine glycan. A disulfide bridge links Cys429 with Cys492. The chain crosses the membrane as a helical span at residues 526–546 (LLIGFVIAAGLMCIFVMILTY). Residues 547-978 (KYLQKPMYEV…TQPLLVHEDV (432 aa)) are Cytoplasmic-facing. Residues Tyr548 and Tyr554 each carry the phosphotyrosine modification. Tyr569 lines the Mg(2+) pocket. A phosphotyrosine; by autocatalysis mark is found at Tyr569 and Tyr571. The segment at 569-571 (YVY) is important for interaction with phosphotyrosine-binding proteins. In terms of domain architecture, Protein kinase spans 590 to 939 (LSFGKTLGAG…ISESTNHIYS (350 aa)). ATP is bound by residues 597-604 (GAGAFGKV), Lys624, and 672-678 (EYCCYGD). Residues Tyr704 and Tyr722 each carry the phosphotyrosine; by autocatalysis modification. Position 731 is a phosphotyrosine (Tyr731). Ser743 and Ser748 each carry phosphoserine; by PKC/PRKCA. The active-site Proton acceptor is the Asp794. Arg798 contributes to the ATP binding site. Mg(2+) is bound by residues Asn799 and Asp812. Position 823 is a phosphoserine (Ser823). At Tyr825 the chain carries Phosphotyrosine; by autocatalysis. The residue at position 893 (Ser893) is a Phosphoserine. Residue Tyr902 is modified to Phosphotyrosine. Tyr938 carries the post-translational modification Phosphotyrosine; by autocatalysis. Residue Ser961 is modified to Phosphoserine.

This sequence belongs to the protein kinase superfamily. Tyr protein kinase family. CSF-1/PDGF receptor subfamily. As to quaternary structure, monomer in the absence of bound KITLG/SCF. Homodimer in the presence of bound KITLG/SCF, forming a heterotetramer with two KITLG/SCF molecules. Interacts (via phosphorylated tyrosine residues) with the adapter proteins GRB2 and GRB7 (via SH2 domain), and SH2B2/APS. Interacts (via C-terminus) with MPDZ (via the tenth PDZ domain). Interacts (via phosphorylated tyrosine residues) with PIK3R1 and PIK3CD. Interacts (via phosphorylated tyrosine) with CRK (isoform Crk-II), FYN, SHC1 and MATK/CHK (via SH2 domain). Interacts with LYN and FES/FPS. Interacts (via phosphorylated tyrosine residues) with the protein phosphatases PTPN6/SHP-1 (via SH2 domain), PTPN11/SHP-2 (via SH2 domain) and PTPRU. Interacts with PLCG1. Interacts with DOK1 and TEC. Interacts with IL1RAP (independent of stimulation with KITLG/SCF). A mast cell-specific KITLG/SCF-induced interleukin-33 signaling complex contains IL1RL1, IL1RAP, KIT and MYD88. Ubiquitinated by SOCS6. KIT is rapidly ubiquitinated after autophosphorylation induced by KITLG/SCF binding, leading to internalization and degradation. Post-translationally, autophosphorylated on tyrosine residues. KITLG/SCF binding promotes autophosphorylation. Phosphorylated tyrosine residues are important for interaction with specific binding partners.

It is found in the cell membrane. The catalysed reaction is L-tyrosyl-[protein] + ATP = O-phospho-L-tyrosyl-[protein] + ADP + H(+). Its activity is regulated as follows. Present in an inactive conformation in the absence of bound ligand. KITLG/SCF binding leads to dimerization and activation by autophosphorylation on tyrosine residues. Activity is down-regulated by PRKCA-mediated phosphorylation on serine residues. In terms of biological role, tyrosine-protein kinase that acts as a cell-surface receptor for the cytokine KITLG/SCF and plays an essential role in the regulation of cell survival and proliferation, hematopoiesis, stem cell maintenance, gametogenesis, mast cell development, migration and function, and in melanogenesis. In response to KITLG/SCF binding, KIT can activate several signaling pathways. Phosphorylates PIK3R1, PLCG1, SH2B2/APS and CBL. Activates the AKT1 signaling pathway by phosphorylation of PIK3R1, the regulatory subunit of phosphatidylinositol 3-kinase. Activated KIT also transmits signals via GRB2 and activation of RAS, RAF1 and the MAP kinases MAPK1/ERK2 and/or MAPK3/ERK1. Promotes activation of STAT family members STAT1, STAT3, STAT5A and STAT5B. Activation of PLCG1 leads to the production of the cellular signaling molecules diacylglycerol and inositol 1,4,5-trisphosphate. KIT signaling is modulated by protein phosphatases, and by rapid internalization and degradation of the receptor. Activated KIT promotes phosphorylation of the protein phosphatases PTPN6/SHP-1 and PTPRU, and of the transcription factors STAT1, STAT3, STAT5A and STAT5B. Promotes phosphorylation of PIK3R1, CBL, CRK (isoform Crk-II), LYN, MAPK1/ERK2 and/or MAPK3/ERK1, PLCG1, SRC and SHC1. The chain is Mast/stem cell growth factor receptor Kit (KIT) from Capra hircus (Goat).